We begin with the raw amino-acid sequence, 604 residues long: Aspartate--tRNA(Asp/Asn) ligase (604 aa).

E174 is a binding site for L-aspartate. Residues 198–201 (QLYK) are aspartate. R220 provides a ligand contact to L-aspartate. ATP contacts are provided by residues 220–222 (RDE) and Q229. H460 contacts L-aspartate. ATP is bound at residue E494. Residue R501 coordinates L-aspartate. 546–549 (GLDR) is an ATP binding site.

Belongs to the class-II aminoacyl-tRNA synthetase family. Type 1 subfamily. In terms of assembly, homodimer.

The protein resides in the cytoplasm. The enzyme catalyses tRNA(Asx) + L-aspartate + ATP = L-aspartyl-tRNA(Asx) + AMP + diphosphate. Aspartyl-tRNA synthetase with relaxed tRNA specificity since it is able to aspartylate not only its cognate tRNA(Asp) but also tRNA(Asn). Reaction proceeds in two steps: L-aspartate is first activated by ATP to form Asp-AMP and then transferred to the acceptor end of tRNA(Asp/Asn). This Paracidovorax citrulli (strain AAC00-1) (Acidovorax citrulli) protein is Aspartate--tRNA(Asp/Asn) ligase.